Reading from the N-terminus, the 92-residue chain is Small ribosomal subunit protein uS19 (92 aa).

It belongs to the universal ribosomal protein uS19 family.

Functionally, protein S19 forms a complex with S13 that binds strongly to the 16S ribosomal RNA. This Rhizobium johnstonii (strain DSM 114642 / LMG 32736 / 3841) (Rhizobium leguminosarum bv. viciae) protein is Small ribosomal subunit protein uS19.